Consider the following 296-residue polypeptide: Lipoyl synthase (296 aa).

7 residues coordinate [4Fe-4S] cluster: C38, C43, C49, C64, C68, C71, and S279. Residues 50–268 enclose the Radical SAM core domain; sequence WDGGCLTFMV…AEYGRSLGFK (219 aa).

It belongs to the radical SAM superfamily. Lipoyl synthase family. Requires [4Fe-4S] cluster as cofactor.

It localises to the cytoplasm. It catalyses the reaction [[Fe-S] cluster scaffold protein carrying a second [4Fe-4S](2+) cluster] + N(6)-octanoyl-L-lysyl-[protein] + 2 oxidized [2Fe-2S]-[ferredoxin] + 2 S-adenosyl-L-methionine + 4 H(+) = [[Fe-S] cluster scaffold protein] + N(6)-[(R)-dihydrolipoyl]-L-lysyl-[protein] + 4 Fe(3+) + 2 hydrogen sulfide + 2 5'-deoxyadenosine + 2 L-methionine + 2 reduced [2Fe-2S]-[ferredoxin]. It participates in protein modification; protein lipoylation via endogenous pathway; protein N(6)-(lipoyl)lysine from octanoyl-[acyl-carrier-protein]: step 2/2. Its function is as follows. Catalyzes the radical-mediated insertion of two sulfur atoms into the C-6 and C-8 positions of the octanoyl moiety bound to the lipoyl domains of lipoate-dependent enzymes, thereby converting the octanoylated domains into lipoylated derivatives. The protein is Lipoyl synthase of Methanocella arvoryzae (strain DSM 22066 / NBRC 105507 / MRE50).